Here is a 301-residue protein sequence, read N- to C-terminus: Probable alpha-L-glutamate ligase (301 aa).

The ATP-grasp domain occupies 104 to 287 (LQLLSRRGIG…VAGMIIEHLE (184 aa)). ATP-binding positions include Lys-141, 178 to 179 (EY), Asp-187, and 211 to 213 (RSN). Residues Asp-248, Glu-260, and Asn-262 each coordinate Mg(2+). The Mn(2+) site is built by Asp-248, Glu-260, and Asn-262.

Belongs to the RimK family. It depends on Mg(2+) as a cofactor. Mn(2+) serves as cofactor.

This chain is Probable alpha-L-glutamate ligase, found in Pseudomonas putida (strain ATCC 700007 / DSM 6899 / JCM 31910 / BCRC 17059 / LMG 24140 / F1).